Consider the following 296-residue polypeptide: MNTAMEETQRIEQFLRKALVSERKHGYLIGVSGGLDSAVVLKLLVQAVGKENVLGLILPDRDTEKKSTTLARSLLEQEKVPYKVISMTPLLRHLGVYKDMPLFLLPTRGLKESIVRRFYNDYTKKLNKPVFFAQWEEPPTQLPYFYEGIAYYRIKHRVRMATLYYYAEKNDYLLVGCTNLSERLIGFYVKYGDDVCDVAPIAHLYKTEVRQLSEYLSVPEDIRNRPPSPDLIPGITDEYSLGINYETLDQILAGLEEGKTAEDLKQLFPADIVELVINQVKFTQKLEGKPYMLKRA.

30–37 (GVSGGLDS) is an ATP binding site. Asp36 is a binding site for Mg(2+). Residue Arg157 coordinates deamido-NAD(+). Glu182 contributes to the Mg(2+) binding site. Residues Lys190 and Asp197 each contribute to the deamido-NAD(+) site. ATP-binding residues include Lys206 and Ser228.

It belongs to the NAD synthetase family. Homodimer.

The catalysed reaction is deamido-NAD(+) + NH4(+) + ATP = AMP + diphosphate + NAD(+) + H(+). The protein operates within cofactor biosynthesis; NAD(+) biosynthesis; NAD(+) from deamido-NAD(+) (ammonia route): step 1/1. In terms of biological role, catalyzes the ATP-dependent amidation of deamido-NAD to form NAD. Uses ammonia as a nitrogen source. The chain is NH(3)-dependent NAD(+) synthetase from Coprothermobacter proteolyticus (strain ATCC 35245 / DSM 5265 / OCM 4 / BT).